Consider the following 140-residue polypeptide: Gonadotropin subunit beta-2 (140 aa).

The first 24 residues, methionine 1–glycine 24, serve as a signal peptide directing secretion. Intrachain disulfides connect cysteine 30-cysteine 78, cysteine 44-cysteine 93, cysteine 47-cysteine 131, cysteine 55-cysteine 109, cysteine 59-cysteine 111, and cysteine 114-cysteine 121. Asparagine 34 carries an N-linked (GlcNAc...) asparagine glycan.

The protein belongs to the glycoprotein hormones subunit beta family. As to quaternary structure, heterodimer of an alpha and a beta chain.

It localises to the secreted. Involved in gametogenesis and steroidogenesis. In Anguilla anguilla (European freshwater eel), this protein is Gonadotropin subunit beta-2 (cgbb).